The chain runs to 671 residues: tRNA 5-methylaminomethyl-2-thiouridine biosynthesis bifunctional protein MnmC (671 aa).

The interval 1–245 is tRNA (mnm(5)s(2)U34)-methyltransferase; sequence MVNVMNTLSF…KREMLWGEKP (245 aa). The tract at residues 272–671 is FAD-dependent cmnm(5)s(2)U34 oxidoreductase; that stretch reads VGGGVASLFV…RKLLKGSKVE (400 aa).

In the N-terminal section; belongs to the methyltransferase superfamily. tRNA (mnm(5)s(2)U34)-methyltransferase family. It in the C-terminal section; belongs to the DAO family. FAD is required as a cofactor.

The protein resides in the cytoplasm. It catalyses the reaction 5-aminomethyl-2-thiouridine(34) in tRNA + S-adenosyl-L-methionine = 5-methylaminomethyl-2-thiouridine(34) in tRNA + S-adenosyl-L-homocysteine + H(+). Functionally, catalyzes the last two steps in the biosynthesis of 5-methylaminomethyl-2-thiouridine (mnm(5)s(2)U) at the wobble position (U34) in tRNA. Catalyzes the FAD-dependent demodification of cmnm(5)s(2)U34 to nm(5)s(2)U34, followed by the transfer of a methyl group from S-adenosyl-L-methionine to nm(5)s(2)U34, to form mnm(5)s(2)U34. The sequence is that of tRNA 5-methylaminomethyl-2-thiouridine biosynthesis bifunctional protein MnmC from Actinobacillus pleuropneumoniae serotype 5b (strain L20).